A 469-amino-acid chain; its full sequence is Citrate synthase, mitochondrial (469 aa).

A mitochondrion-targeting transit peptide spans M1–S30. Residues H304 and H350 contribute to the active site. Position 359 (R359) interacts with oxaloacetate. The active site involves D405. The oxaloacetate site is built by R431 and R451.

Belongs to the citrate synthase family. Homodimer.

It localises to the mitochondrion matrix. The catalysed reaction is oxaloacetate + acetyl-CoA + H2O = citrate + CoA + H(+). It functions in the pathway carbohydrate metabolism; tricarboxylic acid cycle; isocitrate from oxaloacetate: step 1/2. Functionally, key enzyme of the Krebs tricarboxylic acid cycle which catalyzes the synthesis of citrate from acetyl coenzyme A and oxaloacetate. The polypeptide is Citrate synthase, mitochondrial (cs) (Katsuwonus pelamis (Skipjack tuna)).